The following is a 156-amino-acid chain: 6,7-dimethyl-8-ribityllumazine synthase (156 aa).

Residues phenylalanine 23, alanine 57–glutamate 59, and threonine 81–isoleucine 83 contribute to the 5-amino-6-(D-ribitylamino)uracil site. Serine 86–threonine 87 lines the (2S)-2-hydroxy-3-oxobutyl phosphate pocket. Histidine 89 acts as the Proton donor in catalysis. Residue phenylalanine 114 participates in 5-amino-6-(D-ribitylamino)uracil binding. Arginine 128 is a (2S)-2-hydroxy-3-oxobutyl phosphate binding site.

Belongs to the DMRL synthase family. In terms of assembly, forms an icosahedral capsid composed of 60 subunits, arranged as a dodecamer of pentamers.

The catalysed reaction is (2S)-2-hydroxy-3-oxobutyl phosphate + 5-amino-6-(D-ribitylamino)uracil = 6,7-dimethyl-8-(1-D-ribityl)lumazine + phosphate + 2 H2O + H(+). Its pathway is cofactor biosynthesis; riboflavin biosynthesis; riboflavin from 2-hydroxy-3-oxobutyl phosphate and 5-amino-6-(D-ribitylamino)uracil: step 1/2. In terms of biological role, catalyzes the formation of 6,7-dimethyl-8-ribityllumazine by condensation of 5-amino-6-(D-ribitylamino)uracil with 3,4-dihydroxy-2-butanone 4-phosphate. This is the penultimate step in the biosynthesis of riboflavin. The sequence is that of 6,7-dimethyl-8-ribityllumazine synthase from Halalkalibacterium halodurans (strain ATCC BAA-125 / DSM 18197 / FERM 7344 / JCM 9153 / C-125) (Bacillus halodurans).